The chain runs to 170 residues: Ribosome maturation factor RimM (170 aa).

A PRC barrel domain is found at 98–170 (EGQYYWADLE…RIELDWDPDF (73 aa)).

Belongs to the RimM family. As to quaternary structure, binds ribosomal protein uS19.

It localises to the cytoplasm. An accessory protein needed during the final step in the assembly of 30S ribosomal subunit, possibly for assembly of the head region. Essential for efficient processing of 16S rRNA. May be needed both before and after RbfA during the maturation of 16S rRNA. It has affinity for free ribosomal 30S subunits but not for 70S ribosomes. This chain is Ribosome maturation factor RimM, found in Alkalilimnicola ehrlichii (strain ATCC BAA-1101 / DSM 17681 / MLHE-1).